A 660-amino-acid polypeptide reads, in one-letter code: Bifunctional polymyxin resistance protein ArnA (660 aa).

The interval 1–304 (MKAVIFAYHD…ALGLVKGALL (304 aa)) is formyltransferase ArnAFT. His104 serves as the catalytic Proton donor; for formyltransferase activity. Residues Arg114 and 136 to 140 (TARAD) contribute to the (6R)-10-formyltetrahydrofolate site. The interval 314 to 660 (RRTRVLILGV…QTVDLPDAAQ (347 aa)) is dehydrogenase ArnADH. Residues Asp347 and 368-369 (DI) contribute to the NAD(+) site. Residues Ala393, Tyr398, and 432 to 433 (TS) contribute to the UDP-alpha-D-glucuronate site. Catalysis depends on Glu434, which acts as the Proton acceptor; for decarboxylase activity. Residues Arg460, Asn492, 526 to 535 (KLVDGGAQKR), and Tyr613 contribute to the UDP-alpha-D-glucuronate site. The active-site Proton donor; for decarboxylase activity is Arg619.

The protein in the N-terminal section; belongs to the Fmt family. UDP-L-Ara4N formyltransferase subfamily. This sequence in the C-terminal section; belongs to the NAD(P)-dependent epimerase/dehydratase family. UDP-glucuronic acid decarboxylase subfamily. Homohexamer, formed by a dimer of trimers.

It catalyses the reaction UDP-alpha-D-glucuronate + NAD(+) = UDP-beta-L-threo-pentopyranos-4-ulose + CO2 + NADH. It carries out the reaction UDP-4-amino-4-deoxy-beta-L-arabinose + (6R)-10-formyltetrahydrofolate = UDP-4-deoxy-4-formamido-beta-L-arabinose + (6S)-5,6,7,8-tetrahydrofolate + H(+). It functions in the pathway nucleotide-sugar biosynthesis; UDP-4-deoxy-4-formamido-beta-L-arabinose biosynthesis; UDP-4-deoxy-4-formamido-beta-L-arabinose from UDP-alpha-D-glucuronate: step 1/3. The protein operates within nucleotide-sugar biosynthesis; UDP-4-deoxy-4-formamido-beta-L-arabinose biosynthesis; UDP-4-deoxy-4-formamido-beta-L-arabinose from UDP-alpha-D-glucuronate: step 3/3. Its pathway is bacterial outer membrane biogenesis; lipopolysaccharide biosynthesis. Bifunctional enzyme that catalyzes the oxidative decarboxylation of UDP-glucuronic acid (UDP-GlcUA) to UDP-4-keto-arabinose (UDP-Ara4O) and the addition of a formyl group to UDP-4-amino-4-deoxy-L-arabinose (UDP-L-Ara4N) to form UDP-L-4-formamido-arabinose (UDP-L-Ara4FN). The modified arabinose is attached to lipid A and is required for resistance to polymyxin and cationic antimicrobial peptides. The sequence is that of Bifunctional polymyxin resistance protein ArnA from Sodalis glossinidius (strain morsitans).